The following is a 337-amino-acid chain: Flagellar filament outer layer protein (337 aa).

Positions 1 to 21 (MKRFFAILGAALFVGNSGAFA) are cleaved as a signal peptide.

In terms of assembly, the flagellum consists of an outer layer composed of repeating units of FlaA around a core that contains one or all of five antigenically related polypeptides.

It localises to the periplasmic flagellum. Its subcellular location is the periplasm. Its function is as follows. Component of the outer layer of the flagella. In Spirochaeta aurantia, this protein is Flagellar filament outer layer protein (flaA).